The sequence spans 915 residues: Coronin-7 (915 aa).

WD repeat units lie at residues 75–115 (CHSD…QALP), 124–163 (PEDA…PLTE), 166–205 (THGD…EAAQ), and 209–253 (AHEN…AALT). A disordered region spans residues 396–456 (TSCLAPPAEL…TSPSQRSLQS (61 aa)). 2 stretches are compositionally biased toward low complexity: residues 399–413 (LAPP…AQPA) and 420–450 (SSTP…TSPS). 2 positions are modified to phosphoserine: S453 and S456. K463 is covalently cross-linked (Glycyl lysine isopeptide (Lys-Gly) (interchain with G-Cter in ubiquitin)). 4 WD repeats span residues 533 to 573 (QNGV…LQEV), 583 to 623 (GHTE…EQLR), 626 to 665 (GHRD…EPLQ), and 719 to 759 (DVAP…PFFL). The tract at residues 850–915 (PPGMTPVSQA…FEGVDEDEWD (66 aa)) is disordered. Residues 859 to 869 (APREAPARRAP) show a composition bias toward low complexity. Residues 874 to 886 (LEEKSDQQKKEEL) show a composition bias toward basic and acidic residues. Residue S905 is modified to Phosphoserine.

Belongs to the WD repeat coronin family. In terms of assembly, interacts with clathrin adapter AP1 complex. This interaction takes place at Golgi membranes and not AP1-positive endosomal membranes. Interacts (when ubiquitinated at Lys-463) with EPS15. The membrane-associated form is phosphorylated on tyrosine residues. Post-translationally, ubiquitinated via 'Lys-33'-linked ubiquitin chains by the BCR(KLHL20) E3 ubiquitin ligase complex: 'Lys-33'-linked ubiquitination promotes interaction with EPS15 and facilitates actin polymerization at the trans-Golgi network, thereby facilitating post-Golgi trafficking. Deubiquitinated by ZRANB1/TRABID.

It localises to the golgi apparatus membrane. The protein resides in the golgi apparatus. The protein localises to the trans-Golgi network. It is found in the cytoplasmic vesicle. Its subcellular location is the cytoplasm. It localises to the cytosol. Functionally, F-actin regulator involved in anterograde Golgi to endosome transport: upon ubiquitination via 'Lys-33'-linked ubiquitin chains by the BCR(KLHL20) E3 ubiquitin ligase complex, interacts with EPS15 and localizes to the trans-Golgi network, where it promotes actin polymerization, thereby facilitating post-Golgi trafficking. May play a role in the maintenance of the Golgi apparatus morphology. The protein is Coronin-7 (CORO7) of Bos taurus (Bovine).